Reading from the N-terminus, the 335-residue chain is Glycerol-3-phosphate dehydrogenase [NAD(P)+] (335 aa).

3 residues coordinate NADPH: serine 12, tryptophan 13, and lysine 107. Sn-glycerol 3-phosphate-binding residues include lysine 107, glycine 138, and serine 140. Alanine 142 provides a ligand contact to NADPH. Positions 193, 246, 256, 257, and 258 each coordinate sn-glycerol 3-phosphate. The active-site Proton acceptor is lysine 193. Arginine 257 lines the NADPH pocket. Residues valine 281 and glutamate 283 each coordinate NADPH.

Belongs to the NAD-dependent glycerol-3-phosphate dehydrogenase family.

It is found in the cytoplasm. The enzyme catalyses sn-glycerol 3-phosphate + NAD(+) = dihydroxyacetone phosphate + NADH + H(+). It catalyses the reaction sn-glycerol 3-phosphate + NADP(+) = dihydroxyacetone phosphate + NADPH + H(+). It functions in the pathway membrane lipid metabolism; glycerophospholipid metabolism. Its function is as follows. Catalyzes the reduction of the glycolytic intermediate dihydroxyacetone phosphate (DHAP) to sn-glycerol 3-phosphate (G3P), the key precursor for phospholipid synthesis. The sequence is that of Glycerol-3-phosphate dehydrogenase [NAD(P)+] from Geobacter sp. (strain M21).